The chain runs to 344 residues: Uroporphyrinogen decarboxylase (344 aa).

Substrate contacts are provided by residues 29–33 (RQAGR), Asp79, Tyr153, Ser208, and His324.

Belongs to the uroporphyrinogen decarboxylase family. Homodimer.

The protein localises to the cytoplasm. The catalysed reaction is uroporphyrinogen III + 4 H(+) = coproporphyrinogen III + 4 CO2. It functions in the pathway porphyrin-containing compound metabolism; protoporphyrin-IX biosynthesis; coproporphyrinogen-III from 5-aminolevulinate: step 4/4. Catalyzes the decarboxylation of four acetate groups of uroporphyrinogen-III to yield coproporphyrinogen-III. The chain is Uroporphyrinogen decarboxylase from Rhizorhabdus wittichii (strain DSM 6014 / CCUG 31198 / JCM 15750 / NBRC 105917 / EY 4224 / RW1) (Sphingomonas wittichii).